We begin with the raw amino-acid sequence, 3097 residues long: Neural-cadherin (3097 aa).

The first 36 residues, Met-1 to Ala-36, serve as a signal peptide directing secretion. N-linked (GlcNAc...) asparagine glycosylation is found at Asn-97 and Asn-150. One can recognise a Cadherin 1 domain in the interval Val-181–Phe-305. 2 N-linked (GlcNAc...) asparagine glycosylation sites follow: Asn-325 and Asn-426. 15 consecutive Cadherin domains span residues His-430–Phe-543, Val-554–Phe-651, Ile-660–Phe-756, Val-766–Phe-858, Val-867–Phe-968, Val-978–Phe-1078, Val-1087–Trp-1183, Val-1193–Phe-1299, Val-1307–Phe-1414, Val-1423–Phe-1514, Ile-1523–Phe-1630, Val-1639–Phe-1742, Thr-1749–Phe-1861, Val-1870–Phe-1966, and Leu-1974–Ser-2085. Asn-930 carries an N-linked (GlcNAc...) asparagine glycan. An N-linked (GlcNAc...) asparagine glycan is attached at Asn-1266. 11 disulfides stabilise this stretch: Cys-2346–Cys-2357, Cys-2351–Cys-2366, Cys-2368–Cys-2377, Cys-2559–Cys-2585, Cys-2592–Cys-2607, Cys-2601–Cys-2616, Cys-2618–Cys-2627, Cys-2787–Cys-2822, Cys-2869–Cys-2880, Cys-2874–Cys-2891, and Cys-2893–Cys-2902. The EGF-like 1 domain maps to Cys-2346 to Cys-2377. The 207-residue stretch at Gln-2379–Cys-2585 folds into the Laminin G-like 1 domain. In terms of domain architecture, EGF-like 2 spans Cys-2592–Cys-2627. A Laminin G-like 2 domain is found at Thr-2631–Cys-2822. One can recognise an EGF-like 3 domain in the interval Cys-2869–Cys-2902. Residues Ala-2917–Val-2937 form a helical membrane-spanning segment. Over Tyr-2938 to Leu-3097 the chain is Cytoplasmic.

In the embryo, the protein first appears in the mesoderm at stage 9 and is present in the myoblasts and muscle fibers by stage 12 and stage 14, respectively. At stage 12 the protein is also located in the axons of the entire CNS, but not in the glial cells. In third instar larvae protein is expressed in the CNS neuropile, photoreceptor axons and precursors of adult muscles.

Its subcellular location is the cell membrane. In terms of biological role, cadherins are calcium-dependent cell adhesion proteins. They preferentially interact with themselves in a homophilic manner in connecting cells; cadherins may thus contribute to the sorting of heterogeneous cell types. May associate with arm neural isoform and participate in the transmission of developmental information. The sequence is that of Neural-cadherin (CadN) from Drosophila melanogaster (Fruit fly).